A 128-amino-acid polypeptide reads, in one-letter code: Gastrotropin (128 aa).

At A2 the chain carries N-acetylalanine.

It belongs to the calycin superfamily. Fatty-acid binding protein (FABP) family.

It localises to the cytoplasm. The protein resides in the membrane. Its function is as follows. Binds to bile acids and is involved in enterohepatic bile acid metabolism. Required for efficient apical to basolateral transport of conjugated bile acids in ileal enterocytes. Stimulates gastric acid and pepsinogen secretion. The polypeptide is Gastrotropin (FABP6) (Bos taurus (Bovine)).